The chain runs to 177 residues: MTTACPARTSSLMDDLLGLLRIRIKRGVNLAVRDISSSDPYVVVKMGKQKLKTRVINKDVNPEWNEDLTLSVTDSNLTVLLTVYDHDMFSKDDKMGDAEFEIKPYIEALRMQLDGLPSGTIVTTVKPSRRNCLAEESRVTWVDGKLVQDLVLRLRHVECGEVEAQLQWIDLPGSKGL.

The C2 domain occupies 4 to 118 (ACPARTSSLM…LRMQLDGLPS (115 aa)). Residues Arg-33, Asp-34, Asp-39, Asp-85, His-86, Asp-87, and Asp-93 each contribute to the Ca(2+) site.

Belongs to the plant CAR protein family. In terms of assembly, dimers and oligomers. Binds to PYR/PYL/RCAR abscisic acid intracellular receptors in an ABA-independent manner, both at the plasma membrane and in the nucleus. Interacts directly with PYR1, PYL1, PYL4, PYL6 and PYL8. Binds phospholipids in a Ca(2+)-dependent manner. Interacts with YchF1. It depends on Ca(2+) as a cofactor.

Its subcellular location is the cell membrane. It localises to the nucleus. The protein localises to the cytoplasm. It is found in the cytosol. Its function is as follows. Mediates the transient calcium-dependent interaction of PYR/PYL/RCAR abscisic acid (ABA) receptors with the plasma membrane and thus regulates ABA sensitivity. Stimulates the GTPase/ATPase activities of YchF1, and regulates its subcellular localization. Promotes tolerance towards salinity stress by limiting the accumulation of reactive oxygen species (ROS). Promotes resistance to bacterial pathogens (e.g. Xanthomonas oryzae pv. oryzae and P.syringae pv. tomato DC3000). Binds liposomes in the absence of exogenous Ca(2+), but this activity is enhanced in the presence of Ca(2+) and generates membrane curvature. In Arabidopsis thaliana (Mouse-ear cress), this protein is Protein C2-DOMAIN ABA-RELATED 4.